The sequence spans 89 residues: Small ribosomal subunit protein uS15 (89 aa).

This sequence belongs to the universal ribosomal protein uS15 family. In terms of assembly, part of the 30S ribosomal subunit. Forms a bridge to the 50S subunit in the 70S ribosome, contacting the 23S rRNA.

One of the primary rRNA binding proteins, it binds directly to 16S rRNA where it helps nucleate assembly of the platform of the 30S subunit by binding and bridging several RNA helices of the 16S rRNA. Its function is as follows. Forms an intersubunit bridge (bridge B4) with the 23S rRNA of the 50S subunit in the ribosome. In Listeria innocua serovar 6a (strain ATCC BAA-680 / CLIP 11262), this protein is Small ribosomal subunit protein uS15.